The sequence spans 244 residues: Sepiapterin reductase (244 aa).

NADP(+)-binding positions include 9–15 (GAGKGIG), 40–42 (SRT), 66–67 (DI), and N93. F99 serves as a coordination point for substrate. T116 is an NADP(+) binding site. Substrate contacts are provided by S145 and Y158. Residues Y158, K162, and 191 to 196 (VYTPMW) contribute to the NADP(+) site. Position 196 (W196) interacts with substrate.

Belongs to the short-chain dehydrogenases/reductases (SDR) family. Homodimer.

Its subcellular location is the cytoplasm. It carries out the reaction L-threo-7,8-dihydrobiopterin + NADP(+) = L-sepiapterin + NADPH + H(+). The catalysed reaction is L-threo-tetrahydrobiopterin + 2 NADP(+) = 6-pyruvoyl-5,6,7,8-tetrahydropterin + 2 NADPH + 2 H(+). Slightly inhibited by N-acetyldopamine but not by N-acetylserotonin or melatonin. Its function is as follows. Catalyzes the final reductions in tetra-hydrobiopterin biosynthesis to form 5,6,7,8-tetrahydrobiopterin. The sequence is that of Sepiapterin reductase from Chlorobaculum tepidum (strain ATCC 49652 / DSM 12025 / NBRC 103806 / TLS) (Chlorobium tepidum).